A 416-amino-acid polypeptide reads, in one-letter code: MPKTKLTSPPFKILKCTECDACINVPSILQSNEQAECPRCHHLLASGTRWSLHRCAMIALSILILMPFSLNYPLLSLHLLGIKIDASIWDGIWKMAVGGYEYTAFMIFICAVVMPITFALLVIMLWLAKIFQIKPRSVLLFLGYIKAWVMFDVYLVALGVTIFKVREYATLEINIYLIPFIFTALLTTLLFIKLNLSALWQEFYPECTSVYTKQAVELCPACHYTFTQKSIHYDHQQKICCPRCQSPLNTSDKLKLQATWATLIAGIIMLFPANLLPISGIYLTGALSEDTLISGVISFVKSGSYFVAFVVFFASIFVPISKIFIMLYLLACVHFKWQHSIKWQMRLLHLVHFVGRWSMLDLFVLALMMSLVTRGEIINFTVGPGAFYFGAAVFCTMLSTSQFDSKLIWKIYDREK.

The next 8 membrane-spanning stretches (helical) occupy residues 62–82, 107–127, 138–158, 172–192, 263–283, 306–326, 347–367, and 377–397; these read ILIL…LLGI, IFIC…MLWL, VLLF…LVAL, EINI…LLFI, LIAG…GIYL, FVAF…IFIM, LLHL…VLAL, and IINF…FCTM.

The protein belongs to the PqiA family.

Its subcellular location is the cell inner membrane. The chain is Probable intermembrane transport protein HI_1671 from Haemophilus influenzae (strain ATCC 51907 / DSM 11121 / KW20 / Rd).